We begin with the raw amino-acid sequence, 223 residues long: 26S proteasome non-ATPase regulatory subunit 9 (223 aa).

The segment covering 103–121 has biased composition (basic and acidic residues); the sequence is RDKEKQARDMAEAHKEAMS. Positions 103-141 are disordered; sequence RDKEKQARDMAEAHKEAMSRKLGQSESQGPPRAFAKVNS. Residues 108 to 195 form the PDZ domain; sequence QARDMAEAHK…KPLNVTVIRR (88 aa). Serine 129 is modified (phosphoserine).

This sequence belongs to the proteasome subunit p27 family. As to quaternary structure, interacts with PSMC3. Part of a transient complex (modulator) containing PSMD9, PSMC6 and PSMC3 formed during the assembly of the 26S proteasome. As to expression, expressed in all tissues tested, highly expressed in liver and kidney.

Its function is as follows. Acts as a chaperone during the assembly of the 26S proteasome, specifically of the base subcomplex of the PA700/19S regulatory complex (RC). During the base subcomplex assembly is part of an intermediate PSMD9:PSMC6:PSMC3 module, also known as modulator trimer complex; PSMD9 is released during the further base assembly process. This Homo sapiens (Human) protein is 26S proteasome non-ATPase regulatory subunit 9 (PSMD9).